A 144-amino-acid chain; its full sequence is MGRFIFVSFGLLVVFLSLSGTAADCPSDWSSFRRYCYQVFQQKMNWEDAEKFCTQQHRGSHLVSFHSSEEVDFVVSKTLPILKANFVWMGLSNVWNECAKEWSDGTKLDYKAWSGQSDCITSKTTDNQWLSMDCSSKRYVVCKF.

Residues 1-23 form the signal peptide; it reads MGRFIFVSFGLLVVFLSLSGTAA. Intrachain disulfides connect cysteine 25/cysteine 36, cysteine 53/cysteine 142, and cysteine 119/cysteine 134. The 112-residue stretch at 32 to 143 folds into the C-type lectin domain; it reads FRRYCYQVFQ…CSSKRYVVCK (112 aa).

This sequence belongs to the snaclec family. As to quaternary structure, heterodimer of subunits alpha and beta; disulfide-linked. Expressed by the venom gland.

The protein localises to the secreted. In terms of biological role, snaclec that induces platelet aggregation in either human platelet rich plasma (PRP) or washed platelet suspensions. It causes aggregation in a dose-dependent manner even in the absence of various platelet agonists such as ADP or von Willebrand factor (vWF). Interestingly, it does not induce aggregation in rabbit PRP. A monoclonal antibody against the platelet GPIb receptor blocks the aggregation induced by trimecetin, suggesting that it acts by binding to GPIb (GP1BA/GP1BB). The polypeptide is Snaclec trimecetin subunit beta (Protobothrops mucrosquamatus (Taiwan habu)).